The primary structure comprises 2189 residues: Chromatin modification-related protein eaf-1 (2189 aa).

3 disordered regions span residues 183–400 (VQGS…SGAE), 415–438 (VIGK…TQHP), and 477–601 (EVAK…PPGL). Positions 234 to 253 (PTPQTVAPPATAPTSTTKTA) are enriched in low complexity. Residues 260 to 277 (AGPKDDTVSRGDAEEKAR) show a composition bias toward basic and acidic residues. Polar residues-rich tracts occupy residues 281 to 293 (TITS…SNGD), 300 to 312 (TLSS…QSAP), and 319 to 333 (ASAS…SQSF). The span at 336–349 (PVSRPEQELRRATT) shows a compositional bias: basic and acidic residues. Residues 534–543 (QPQPSSTAPS) show a composition bias toward low complexity. Polar residues predominate over residues 573-583 (ETQARTSQSSH). An HSA domain is found at 722 to 797 (PVRCLEPARP…PPVRAVDNAD (76 aa)). In terms of domain architecture, Myb-like spans 985–1045 (FESRIASQWT…ECFERWVNLE (61 aa)). 2 stretches are compositionally biased toward low complexity: residues 1320–1330 (VAVQLQQQQHQ) and 1336–1406 (QHPQ…QVTQ). Disordered stretches follow at residues 1320 to 1428 (VAVQ…PMRP), 1622 to 1644 (MQTQ…QAQA), 1663 to 1831 (QKQA…GQVQ), and 1846 to 2189 (VQGQ…APTK). Low complexity-rich tracts occupy residues 1663-1808 (QKQA…QGQG), 1818-1831 (GQGH…GQVQ), 1846-1863 (VQGQ…PQHA), 1873-2089 (QHAQ…QPQQ), and 2097-2189 (SQPQ…APTK).

This sequence belongs to the EAF1 family. In terms of assembly, component of the NuA4 histone acetyltransferase complex.

Its subcellular location is the nucleus. In terms of biological role, component of the NuA4 histone acetyltransferase complex which is involved in transcriptional activation of selected genes principally by acetylation of nucleosomal histone H4 and H2A. The NuA4 complex is also involved in DNA repair. This Neurospora crassa (strain ATCC 24698 / 74-OR23-1A / CBS 708.71 / DSM 1257 / FGSC 987) protein is Chromatin modification-related protein eaf-1 (eaf-1).